A 270-amino-acid chain; its full sequence is Glutamate 5-kinase (270 aa).

Lys15 is an ATP binding site. Substrate contacts are provided by Ser55, Asp142, and Asn158. ATP contacts are provided by residues 178–179 and 220–226; these read SD and TGGMLSK.

Belongs to the glutamate 5-kinase family.

It is found in the cytoplasm. The enzyme catalyses L-glutamate + ATP = L-glutamyl 5-phosphate + ADP. It participates in amino-acid biosynthesis; L-proline biosynthesis; L-glutamate 5-semialdehyde from L-glutamate: step 1/2. Functionally, catalyzes the transfer of a phosphate group to glutamate to form L-glutamate 5-phosphate. The sequence is that of Glutamate 5-kinase from Streptococcus uberis (strain ATCC BAA-854 / 0140J).